The chain runs to 143 residues: MSKFIVYVKKSSEFATIPTRSSKKSAGYDLYSAYDYLVRPKSRVLVKTDICLSIPDECYGRIASRSGLSLNNSIDIGGGVIDGDYRGVIGVIFINNGNSPHYIKRGDRIAQIVFERLANVEIKEISNLDCTCRGDCGFGSSGI.

The protein belongs to the dUTPase family. It depends on Mg(2+) as a cofactor.

The catalysed reaction is dUTP + H2O = dUMP + diphosphate + H(+). In terms of biological role, this enzyme is involved in nucleotide metabolism: it produces dUMP, the immediate precursor of thymidine nucleotides and it decreases the intracellular concentration of dUTP so that uracil cannot be incorporated into DNA. The sequence is that of Deoxyuridine 5'-triphosphate nucleotidohydrolase (DUT) from Yaba monkey tumor virus (strain VR587) (YMTV).